A 123-amino-acid polypeptide reads, in one-letter code: Potassium voltage-gated channel subfamily E member 2 (123 aa).

Asn-6 and Asn-29 each carry an N-linked (GlcNAc...) asparagine glycan. The chain crosses the membrane as a helical span at residues 49-69; it reads VILYLMVMIGMFSFIIVAILV. Residues 70-123 are Cytoplasmic-facing; it reads STVKSKRREHSNDPYHQYIVEDWQEKYKSQILNLEESKATIHENIGAAGFKMSP.

It belongs to the potassium channel KCNE family. Interacts with KCNB1. Associates with KCNH2/ERG1. May associate with KCNQ2 and KCNQ3. Associates with HCN1 and probably HCN2. Heteromultimer with KCNC2. Interacts with KCNC2. Interacts with KCNQ1; forms a heterooligomer complex that targets to the membrane raft and leading to currents with an apparently instantaneous activation, a rapid deactivation process and a linear current-voltage relationship and decreases the amplitude of the outward current. As to expression, highly expressed in brain, heart, skeletal muscle, pancreas, placenta, kidney, colon and thymus. A small but significant expression is found in liver, ovary, testis, prostate, small intestine and leukocytes. Very low expression, nearly undetectable, in lung and spleen.

Its subcellular location is the cell membrane. It is found in the apical cell membrane. In terms of biological role, ancillary protein that functions as a regulatory subunit of the voltage-gated potassium (Kv) channel complex composed of pore-forming and potassium-conducting alpha subunits and of regulatory beta subunits. KCNE2 beta subunit modulates the gating kinetics and enhances stability of the channel complex. Alters the gating of the delayed rectifier Kv channel containing KCNB1 alpha subunit. Associates with KCNH2/HERG alpha subunit Kv channel to form the rapidly activating component of the delayed rectifying potassium current (IKr) in heart. May associate with KCNQ2 and/or KCNQ3 alpha subunits to modulate the native M-type current. May associate with HCN1 and HCN2 channel subunits to increase potassium current. Forms a heterooligomer complex with KCNQ1/KVLQT1 alpha subunits which leads to currents with an apparently instantaneous activation, a rapid deactivation process and a linear current-voltage relationship and decreases the amplitude of the outward current. KCNQ1-KCNE2 channel associates with Na(+)-coupled myo-inositol symporter in the apical membrane of choroid plexus epithelium and regulates the myo-inositol gradient between blood and cerebrospinal fluid with an impact on neuron excitability. This is Potassium voltage-gated channel subfamily E member 2 from Homo sapiens (Human).